The chain runs to 272 residues: 2-dehydro-3-deoxyphosphooctonate aldolase (272 aa).

Belongs to the KdsA family.

Its subcellular location is the cytoplasm. The enzyme catalyses D-arabinose 5-phosphate + phosphoenolpyruvate + H2O = 3-deoxy-alpha-D-manno-2-octulosonate-8-phosphate + phosphate. It functions in the pathway carbohydrate biosynthesis; 3-deoxy-D-manno-octulosonate biosynthesis; 3-deoxy-D-manno-octulosonate from D-ribulose 5-phosphate: step 2/3. It participates in bacterial outer membrane biogenesis; lipopolysaccharide biosynthesis. The chain is 2-dehydro-3-deoxyphosphooctonate aldolase from Geobacter sulfurreducens (strain ATCC 51573 / DSM 12127 / PCA).